The primary structure comprises 296 residues: MNWPALKERINLYEKLMRLDKPIGILLLLWPTLWALWLSALGRPNWIVVWIFILGTVLMRSAGCVINDYADRDFDKHVERTKERPLTAGKVTTKEALALFAGLSLLSFLLVVFLGNTLVIWLSLPAVFLAASYPFTKRFFAIPQAYLGVAFGFGIPMAYAAHLGEVPAEAWWLLLANVFWAVAYDTEYAMVDRDDDLKIGIKTSAITFGRFDVAAVMLCYGVTLAIIGGIGYSLNRGPAFYAGLAVATCIMGVHYTWIRGRERMPCFKAFLHNNWVGLSIFVGIVVDFLVSGRNLW.

Transmembrane regions (helical) follow at residues 22–42, 46–66, 99–121, 139–159, 163–183, 211–231, 238–258, and 270–290; these read PIGILLLLWPTLWALWLSALG, WIVVWIFILGTVLMRSAGCVI, LFAGLSLLSFLLVVFLGNTLVIW, FFAIPQAYLGVAFGFGIPMAY, LGEVPAEAWWLLLANVFWAVA, FDVAAVMLCYGVTLAIIGGIG, PAFYAGLAVATCIMGVHYTWI, and FLHNNWVGLSIFVGIVVDFLV.

This sequence belongs to the UbiA prenyltransferase family. Mg(2+) is required as a cofactor.

The protein resides in the cell inner membrane. It carries out the reaction all-trans-octaprenyl diphosphate + 4-hydroxybenzoate = 4-hydroxy-3-(all-trans-octaprenyl)benzoate + diphosphate. The protein operates within cofactor biosynthesis; ubiquinone biosynthesis. Functionally, catalyzes the prenylation of para-hydroxybenzoate (PHB) with an all-trans polyprenyl group. Mediates the second step in the final reaction sequence of ubiquinone-8 (UQ-8) biosynthesis, which is the condensation of the polyisoprenoid side chain with PHB, generating the first membrane-bound Q intermediate 3-octaprenyl-4-hydroxybenzoate. In Dechloromonas aromatica (strain RCB), this protein is 4-hydroxybenzoate octaprenyltransferase.